The following is a 390-amino-acid chain: EF-hand calcium-binding domain-containing protein 4A (390 aa).

Over residues 1–27 (MSPRSTLRSPLPSRTARSSASSDTPSP) the composition is skewed to low complexity. Positions 1–37 (MSPRSTLRSPLPSRTARSSASSDTPSPGADRQDRMSK) are disordered. 2 EF-hand domains span residues 33-66 (DRMS…QELP) and 67-102 (LSPE…LVGS). Residues D80, D82, N84, Y86, and E91 each coordinate Ca(2+). The stretch at 173–357 (SHLQDALKEK…DDKDAHQAQK (185 aa)) forms a coiled coil. Residues 206–234 (DMESQLKEERERRQALDSMRQGDKKEQLL) are disordered.

Belongs to the EFCAB4 family.

This chain is EF-hand calcium-binding domain-containing protein 4A (cracr2b), found in Danio rerio (Zebrafish).